Reading from the N-terminus, the 201-residue chain is Ribosomal RNA large subunit methyltransferase E (201 aa).

Positions 49, 51, 69, 90, and 113 each coordinate S-adenosyl-L-methionine. Catalysis depends on K153, which acts as the Proton acceptor.

It belongs to the class I-like SAM-binding methyltransferase superfamily. RNA methyltransferase RlmE family.

It localises to the cytoplasm. The enzyme catalyses uridine(2552) in 23S rRNA + S-adenosyl-L-methionine = 2'-O-methyluridine(2552) in 23S rRNA + S-adenosyl-L-homocysteine + H(+). Functionally, specifically methylates the uridine in position 2552 of 23S rRNA at the 2'-O position of the ribose in the fully assembled 50S ribosomal subunit. This Desulfotalea psychrophila (strain LSv54 / DSM 12343) protein is Ribosomal RNA large subunit methyltransferase E.